Consider the following 195-residue polypeptide: Imidazoleglycerol-phosphate dehydratase (195 aa).

This sequence belongs to the imidazoleglycerol-phosphate dehydratase family.

Its subcellular location is the cytoplasm. It catalyses the reaction D-erythro-1-(imidazol-4-yl)glycerol 3-phosphate = 3-(imidazol-4-yl)-2-oxopropyl phosphate + H2O. The protein operates within amino-acid biosynthesis; L-histidine biosynthesis; L-histidine from 5-phospho-alpha-D-ribose 1-diphosphate: step 6/9. This chain is Imidazoleglycerol-phosphate dehydratase, found in Cupriavidus taiwanensis (strain DSM 17343 / BCRC 17206 / CCUG 44338 / CIP 107171 / LMG 19424 / R1) (Ralstonia taiwanensis (strain LMG 19424)).